The primary structure comprises 373 residues: Glutamine synthetase (373 aa).

T2 is modified (N-acetylthreonine). The tract at residues 2 to 25 is required for glutamine-induced ubiquitination by CRL4(CRBN) and proteasomal degradation; that stretch reads TTSASSHLNKGIKQVYMSLPQGEK. Residues K11 and K14 each carry the N6-acetyllysine; by EP300 modification. One can recognise a GS beta-grasp domain in the interval 24–106; the sequence is EKVQAMYIWI…VLCEVFKYNR (83 aa). At Y104 the chain carries Phosphotyrosine. The GS catalytic domain maps to 113-373; the sequence is LRHTCKRIMD…TGDEPFQYKN (261 aa). E134 contacts ATP. Mn(2+)-binding residues include E134, E136, E196, and E203. 203–208 provides a ligand contact to ATP; it reads EFQIGP. L-glutamate is bound at residue 246 to 247; it reads NW. H253 lines the Mn(2+) pocket. ATP is bound by residues 255–257, R319, and R324; that span reads NFS. Residue R319 participates in L-glutamate binding. 336–338 contacts ADP; sequence YFE. Residue E338 coordinates Mn(2+). R340 lines the L-glutamate pocket. S343 is subject to Phosphoserine.

The protein belongs to the glutamine synthetase family. Decamer; composed of two pentamers. Interacts with PALMD. Interacts with RHOJ. Interacts with BEST2; this interaction tethers a fraction of GLUL to the membrane, causing a decrease of cytosolic glutamine synthase (GS) activity and inhibits the chloride channel activity of BEST2 by affecting the gating at the aperture in the absence of intracellular glutamate. Mg(2+) serves as cofactor. Requires Mn(2+) as cofactor. Post-translationally, acetylated by EP300/p300; acetylation is stimulated by increased glutamine levels and promotes ubiquitin-mediated proteasomal degradation. Palmitoylated; undergoes autopalmitoylation. In terms of processing, ubiquitinated by ZNRF1. Ubiquitinated by the DCX (DDB1-CUL4-X-box) E3 ubiquitin-protein ligase complex called CRL4(CRBN), leading to proteasomal degradation. As to expression, expressed in endothelial cells.

It localises to the cytoplasm. Its subcellular location is the cytosol. It is found in the microsome. The protein localises to the mitochondrion. The protein resides in the cell membrane. It catalyses the reaction L-glutamate + NH4(+) + ATP = L-glutamine + ADP + phosphate + H(+). The enzyme catalyses L-cysteinyl-[protein] + hexadecanoyl-CoA = S-hexadecanoyl-L-cysteinyl-[protein] + CoA. With respect to regulation, glutamine synthetase activity is inhibited by methionine sulfoximine (MSO). Glutamine synthetase that catalyzes the ATP-dependent conversion of glutamate and ammonia to glutamine. Its role depends on tissue localization: in the brain, it regulates the levels of toxic ammonia and converts neurotoxic glutamate to harmless glutamine, whereas in the liver, it is one of the enzymes responsible for the removal of ammonia. Plays a key role in ammonium detoxification during erythropoiesis: the glutamine synthetase activity is required to remove ammonium generated by porphobilinogen deaminase (HMBS) during heme biosynthesis to prevent ammonium accumulation and oxidative stress. Essential for proliferation of fetal skin fibroblasts. Independently of its glutamine synthetase activity, required for endothelial cell migration during vascular development: acts by regulating membrane localization and activation of the GTPase RHOJ, possibly by promoting RHOJ palmitoylation. May act as a palmitoyltransferase for RHOJ: able to autopalmitoylate and then transfer the palmitoyl group to RHOJ. Plays a role in ribosomal 40S subunit biogenesis. Through the interaction with BEST2, inhibits BEST2 channel activity by affecting the gating at the aperture in the absence of intracellular L-glutamate, but sensitizes BEST2 to intracellular L-glutamate, which promotes the opening of BEST2 and thus relieves its inhibitory effect on BEST2. This chain is Glutamine synthetase, found in Homo sapiens (Human).